The following is a 436-amino-acid chain: 3-ketoacyl-CoA thiolase (436 aa).

Cys99 (acyl-thioester intermediate) is an active-site residue. Residues His392 and Cys422 each act as proton acceptor in the active site.

This sequence belongs to the thiolase-like superfamily. Thiolase family. As to quaternary structure, heterotetramer of two alpha chains (FadJ) and two beta chains (FadI).

It is found in the cytoplasm. The catalysed reaction is an acyl-CoA + acetyl-CoA = a 3-oxoacyl-CoA + CoA. The protein operates within lipid metabolism; fatty acid beta-oxidation. Its function is as follows. Catalyzes the final step of fatty acid oxidation in which acetyl-CoA is released and the CoA ester of a fatty acid two carbons shorter is formed. This Photorhabdus laumondii subsp. laumondii (strain DSM 15139 / CIP 105565 / TT01) (Photorhabdus luminescens subsp. laumondii) protein is 3-ketoacyl-CoA thiolase.